Consider the following 190-residue polypeptide: LOB domain-containing protein 1 (190 aa).

Over residues 1 to 11 (MESKSDASVAT) the composition is skewed to polar residues. The tract at residues 1–27 (MESKSDASVATTPIISSSSSPPPSLSP) is disordered. An LOB domain is found at 32–133 (SPCAACKILR…AQLAKAQVEM (102 aa)).

It belongs to the LOB domain-containing protein family. Expressed in young shoots, roots, stems, leaves and flowers.

In Arabidopsis thaliana (Mouse-ear cress), this protein is LOB domain-containing protein 1 (LBD1).